The chain runs to 336 residues: Holliday junction branch migration complex subunit RuvB (336 aa).

A large ATPase domain (RuvB-L) region spans residues 4–184 (ADRLISAGTT…FGIVQRLEFY (181 aa)). Residues isoleucine 23, arginine 24, glycine 65, lysine 68, threonine 69, threonine 70, 131–133 (EDY), arginine 174, tyrosine 184, and arginine 221 contribute to the ATP site. Threonine 69 is a Mg(2+) binding site. The interval 185 to 255 (QVPDLQYIVS…IAAQALDMLN (71 aa)) is small ATPAse domain (RuvB-S). Residues 258–336 (AEGFDYMDRK…HFGITPPEMP (79 aa)) are head domain (RuvB-H). Residues arginine 294, arginine 313, and arginine 318 each contribute to the DNA site.

Belongs to the RuvB family. In terms of assembly, homohexamer. Forms an RuvA(8)-RuvB(12)-Holliday junction (HJ) complex. HJ DNA is sandwiched between 2 RuvA tetramers; dsDNA enters through RuvA and exits via RuvB. An RuvB hexamer assembles on each DNA strand where it exits the tetramer. Each RuvB hexamer is contacted by two RuvA subunits (via domain III) on 2 adjacent RuvB subunits; this complex drives branch migration. In the full resolvosome a probable DNA-RuvA(4)-RuvB(12)-RuvC(2) complex forms which resolves the HJ.

It is found in the cytoplasm. It carries out the reaction ATP + H2O = ADP + phosphate + H(+). Functionally, the RuvA-RuvB-RuvC complex processes Holliday junction (HJ) DNA during genetic recombination and DNA repair, while the RuvA-RuvB complex plays an important role in the rescue of blocked DNA replication forks via replication fork reversal (RFR). RuvA specifically binds to HJ cruciform DNA, conferring on it an open structure. The RuvB hexamer acts as an ATP-dependent pump, pulling dsDNA into and through the RuvAB complex. RuvB forms 2 homohexamers on either side of HJ DNA bound by 1 or 2 RuvA tetramers; 4 subunits per hexamer contact DNA at a time. Coordinated motions by a converter formed by DNA-disengaged RuvB subunits stimulates ATP hydrolysis and nucleotide exchange. Immobilization of the converter enables RuvB to convert the ATP-contained energy into a lever motion, pulling 2 nucleotides of DNA out of the RuvA tetramer per ATP hydrolyzed, thus driving DNA branch migration. The RuvB motors rotate together with the DNA substrate, which together with the progressing nucleotide cycle form the mechanistic basis for DNA recombination by continuous HJ branch migration. Branch migration allows RuvC to scan DNA until it finds its consensus sequence, where it cleaves and resolves cruciform DNA. This chain is Holliday junction branch migration complex subunit RuvB, found in Shigella flexneri serotype 5b (strain 8401).